The primary structure comprises 543 residues: Glucose-6-phosphate isomerase (543 aa).

Glu-351 acts as the Proton donor in catalysis. Active-site residues include His-382 and Lys-511.

The protein belongs to the GPI family.

It is found in the cytoplasm. It carries out the reaction alpha-D-glucose 6-phosphate = beta-D-fructose 6-phosphate. It functions in the pathway carbohydrate biosynthesis; gluconeogenesis. It participates in carbohydrate degradation; glycolysis; D-glyceraldehyde 3-phosphate and glycerone phosphate from D-glucose: step 2/4. Catalyzes the reversible isomerization of glucose-6-phosphate to fructose-6-phosphate. The chain is Glucose-6-phosphate isomerase from Hydrogenovibrio crunogenus (strain DSM 25203 / XCL-2) (Thiomicrospira crunogena).